A 387-amino-acid chain; its full sequence is Putative glutamate--cysteine ligase 2 (387 aa).

The protein belongs to the glutamate--cysteine ligase type 2 family. YbdK subfamily.

It catalyses the reaction L-cysteine + L-glutamate + ATP = gamma-L-glutamyl-L-cysteine + ADP + phosphate + H(+). Functionally, ATP-dependent carboxylate-amine ligase which exhibits weak glutamate--cysteine ligase activity. The sequence is that of Putative glutamate--cysteine ligase 2 from Trichormus variabilis (strain ATCC 29413 / PCC 7937) (Anabaena variabilis).